A 250-amino-acid polypeptide reads, in one-letter code: Golgi SNAP receptor complex member 1 (250 aa).

Ala-2 bears the N-acetylalanine mark. Topologically, residues 2 to 229 are cytoplasmic; sequence AAGTSNYWED…QRINLRKRRD (228 aa). The stretch at 10–30 forms a coiled coil; sequence EDLRKQARQLENELDLKLVSF. Residues 39-59 are disordered; sequence HSSARDGRRDRYSSDTTPLLN. A compositionally biased stretch (basic and acidic residues) spans 41–51; that stretch reads SARDGRRDRYS. A coiled-coil region spans residues 70–93; the sequence is MAIEIEQLLARLTGINDKMAEYTS. Ser-141 bears the Phosphoserine mark. The chain crosses the membrane as a helical; Anchor for type IV membrane protein span at residues 230–250; sequence SLILGGVIGVCTILLLLYAFH.

It belongs to the GOSR1 family. As to quaternary structure, component of several multiprotein Golgi SNARE complexes. Identified in a SNARE complex with BET1, STX5 and YKT6, in a SNARE complex with BET1L, STX5 and YKT6, in a SNARE complex with STX5, GOSR2, SEC22B and BET1, and in complex with STX5 and COG3. Interacts with GABARAPL2.

It is found in the golgi apparatus membrane. Its function is as follows. Involved in transport from the ER to the Golgi apparatus as well as in intra-Golgi transport. It belongs to a super-family of proteins called t-SNAREs or soluble NSF (N-ethylmaleimide-sensitive factor) attachment protein receptor. May play a protective role against hydrogen peroxide induced cytotoxicity under glutathione depleted conditions in neuronal cells by regulating the intracellular ROS levels via inhibition of p38 MAPK (MAPK11, MAPK12, MAPK13 and MAPK14). Participates in docking and fusion stage of ER to cis-Golgi transport. Plays an important physiological role in VLDL-transport vesicle-Golgi fusion and thus in VLDL delivery to the hepatic cis-Golgi. The polypeptide is Golgi SNAP receptor complex member 1 (GOSR1) (Bos taurus (Bovine)).